The sequence spans 310 residues: Apolipoprotein E (310 aa).

The signal sequence occupies residues 1–18; it reads MKVLWAALVVTLLAGCQA. A run of 4 repeats spans residues 77 to 98, 99 to 120, 121 to 142, and 143 to 164. Residues 77–248 form an 8 X 22 AA approximate tandem repeats region; the sequence is ALMEETMKEV…RLDEVREQVQ (172 aa). Methionine 140 bears the Methionine sulfoxide mark. Serine 144 is subject to Phosphoserine. The interval 155–165 is LDL and other lipoprotein receptors binding; that stretch reads HLRKLRKRLLR. Residue 159 to 162 participates in heparin binding; sequence LRKR. The segment at residues 165–186 is a repeat; it reads RDAEDLQKRLAVYQAGIREGAE. 3 tandem repeats follow at residues 187 to 204, 205 to 226, and 227 to 248. Residues 203–283 are lipid-binding and lipoprotein association; sequence AATVRSLISK…SWFEPLVQDM (81 aa). 222–229 is a binding site for heparin; that stretch reads GQRLRGRL. Residues 259–310 are homooligomerization; it reads NQMRLQAEAFHARLKSWFEPLVQDMQQKWAELVEKVQLAVGTSPTSESSEKQ. A specificity for association with VLDL region spans residues 271–283; sequence RLKSWFEPLVQDM.

The protein belongs to the apolipoprotein A1/A4/E family. In terms of assembly, homotetramer. May interact with ABCA1; functionally associated with ABCA1 in the biogenesis of HDLs. May interact with APP/A4 amyloid-beta peptide; the interaction is extremely stable in vitro but its physiological significance is unclear. May interact with MAPT. May interact with MAP2. In the cerebrospinal fluid, interacts with secreted SORL1. Interacts with PMEL; this allows the loading of PMEL luminal fragment on ILVs to induce fibril nucleation. APOE exists as multiple glycosylated and sialylated glycoforms within cells and in plasma. The extent of glycosylation and sialylation are tissue and context specific. In terms of processing, glycated in plasma VLDL. Post-translationally, phosphorylated by FAM20C in the extracellular medium.

The protein resides in the secreted. Its subcellular location is the extracellular space. The protein localises to the extracellular matrix. It is found in the extracellular vesicle. It localises to the endosome. The protein resides in the multivesicular body. APOE is an apolipoprotein, a protein associating with lipid particles, that mainly functions in lipoprotein-mediated lipid transport between organs via the plasma and interstitial fluids. APOE is a core component of plasma lipoproteins and is involved in their production, conversion and clearance. Apolipoproteins are amphipathic molecules that interact both with lipids of the lipoprotein particle core and the aqueous environment of the plasma. As such, APOE associates with chylomicrons, chylomicron remnants, very low density lipoproteins (VLDL) and intermediate density lipoproteins (IDL) but shows a preferential binding to high-density lipoproteins (HDL). It also binds a wide range of cellular receptors including the LDL receptor/LDLR, the LDL receptor-related proteins LRP1, LRP2 and LRP8 and the very low-density lipoprotein receptor/VLDLR that mediate the cellular uptake of the APOE-containing lipoprotein particles. Finally, APOE also has a heparin-binding activity and binds heparan-sulfate proteoglycans on the surface of cells, a property that supports the capture and the receptor-mediated uptake of APOE-containing lipoproteins by cells. A main function of APOE is to mediate lipoprotein clearance through the uptake of chylomicrons, VLDLs, and HDLs by hepatocytes. APOE is also involved in the biosynthesis by the liver of VLDLs as well as their uptake by peripheral tissues ensuring the delivery of triglycerides and energy storage in muscle, heart and adipose tissues. By participating in the lipoprotein-mediated distribution of lipids among tissues, APOE plays a critical role in plasma and tissues lipid homeostasis. APOE is also involved in two steps of reverse cholesterol transport, the HDLs-mediated transport of cholesterol from peripheral tissues to the liver, and thereby plays an important role in cholesterol homeostasis. First, it is functionally associated with ABCA1 in the biogenesis of HDLs in tissues. Second, it is enriched in circulating HDLs and mediates their uptake by hepatocytes. APOE also plays an important role in lipid transport in the central nervous system, regulating neuron survival and sprouting. In Tapirus terrestris (Lowland tapir), this protein is Apolipoprotein E (APOE).